A 478-amino-acid chain; its full sequence is MPRRGYSKPGSWGSFWAMLTLVGLVTHAAQRADVGGEAAGTSINHSQAVLQRLQELLRQGNASDVVLRVQAAGTDEVRVFHAHRLLLGLHSELFLELLSNQSEAVLQEPQDCAAVFDKFIRYLYCGELTVLLTQAIPLHRLATKYGVSSLQRGVADYMRAHLAGGAGPAVGWYHYAVGTGDEALRESCLQFLAWNLSAVAASTEWGAVSPELLWQLLQRSDLVLQDELELFHALEAWLGRARPPPAVAERALRAIRYPMIPPAQLFQLQARSAALARHGPAVADLLLQAYQFHAASPLHYAKFFDVNGSAFLPRNYLAPAWGAPWVINNPARDDRSTSFQTQLGPSGHDAGRRVTWNVLFSPRWLPVSLRPVYADAAGTALPAARPEDGRPRLVVTPASSGGDAAGVSFQKTVLVGARQQGRLLVRHAYSFHQSSEEAGDFLAHADLQRRNSEYLVENALHLHLIVKPVYHTLIRTPK.

The first 28 residues, 1 to 28 (MPRRGYSKPGSWGSFWAMLTLVGLVTHA), serve as a signal peptide directing secretion. Residues Asn61, Asn100, and Asn195 are each glycosylated (N-linked (GlcNAc...) asparagine). In terms of domain architecture, BTB spans 63–132 (SDVVLRVQAA…LYCGELTVLL (70 aa)). In terms of domain architecture, BACK spans 169–269 (AVGWYHYAVG…IPPAQLFQLQ (101 aa)).

It is found in the secreted. The chain is BTB/POZ domain-containing protein 17 (BTBD17) from Homo sapiens (Human).